The following is a 1235-amino-acid chain: Insulin receptor substrate 1 (1235 aa).

Position 3 is a phosphoserine (S3). The segment at 3 to 133 (SPPDTDGFSD…AGGGCGGSCS (131 aa)) is mediates interaction with PHIP. The region spanning 12–115 (DVRKVGYLRK…WYQALLQLHN (104 aa)) is the PH domain. A Phosphoserine; by CK2 modification is found at S99. The 105-residue stretch at 155–259 (FKEVWQVILK…EAMRAMSDEF (105 aa)) folds into the IRS-type PTB domain. Positions 258 to 425 (EFRPRTKSQS…SDGGFISSDE (168 aa)) are disordered. 2 positions are modified to phosphoserine; by RPS6KB1: S265 and S302. A compositionally biased stretch (low complexity) spans 265–276 (SQSSSSCSNPIS). S307 is modified (phosphoserine; by IKKB, MAPK8 and RPS6KB1). Phosphoserine occurs at positions 318, 325, 340, and 343. Residues 349–358 (THAHRHRGSS) show a composition bias toward basic residues. Composition is skewed to low complexity over residues 378–399 (SPSA…GSTS) and 407–419 (SSAS…SDGG). Phosphoserine is present on S414. A phosphothreonine mark is found at T441 and T448. Y460 is subject to Phosphotyrosine; by INSR. The short motif at 460–463 (YICM) is the YXXM motif 1 element. T502 is modified (phosphothreonine; by CK2). The segment at 520 to 539 (THSAGTSPTISHQKTPSQSS) is disordered. S522 carries the phosphoserine; by RPS6KB1 modification. The span at 522–539 (SAGTSPTISHQKTPSQSS) shows a compositional bias: polar residues. 2 short sequence motifs (YXXM motif) span residues 546–549 (YTEM) and 608–611 (YMPM). Phosphotyrosine; by INSR is present on Y608. The residue at position 612 (S612) is a Phosphoserine. At Y628 the chain carries Phosphotyrosine; by INSR. Residues 628–631 (YMPM) carry the YXXM motif 4 motif. Residue S632 is modified to Phosphoserine; by RPS6KB1 and ROCK2. Position 658 is a phosphotyrosine (Y658). A YXXM motif 5 motif is present at residues 658–661 (YMMM). Residues 669–689 (PDIGGGSCSSSSISAAPSGSS) are compositionally biased toward low complexity. The tract at residues 669 to 720 (PDIGGGSCSSSSISAAPSGSSYGKPWTNGVGGHHTHALPHAKPPVESGGGKL) is disordered. Positions 727–730 (YMNM) match the YXXM motif 6 motif. The disordered stretch occupies residues 766–921 (FKHTQRPGEP…ATSRSSPSVR (156 aa)). Over residues 771-780 (RPGEPEEGAR) the composition is skewed to basic and acidic residues. Composition is skewed to low complexity over residues 785–794 (RLSSSSGRLR), 801–810 (DSSSSTSSDS), and 872–881 (QQQQQQQQQQ). Position 789 is a phosphoserine; by AMPK and SIK2 (S789). Phosphoserine is present on S891. Phosphotyrosine; by INSR is present on residues Y895, Y939, and Y987. Residues 895-897 (YVN) form a GRB2-binding region. Short sequence motifs (YXXM motif) lie at residues 939 to 942 (YMNM), 987 to 990 (YMTM), and 1010 to 1013 (YADM). The disordered stretch occupies residues 1024–1165 (LPRTTGAAPP…SAPGCGAAGG (142 aa)). A compositionally biased stretch (low complexity) spans 1025–1046 (PRTTGAAPPPSSTASASASVTP). Residues 1072 to 1084 (TRVNLSPNHNQSA) are compositionally biased toward polar residues. S1099 bears the Phosphoserine mark. The residue at position 1100 (S1100) is a Phosphoserine; by RPS6KB1. The segment covering 1101–1114 (ETFSAPTRAANTVS) has biased composition (polar residues). Residues 1118-1128 (GAAGGGSGGGS) show a composition bias toward gly residues. Y1172 carries the post-translational modification Phosphotyrosine; by INSR. The interval 1177-1235 (LVKDVKQHPQDCPSQQQSLPPPPPHQPLGSNEGSSPRRSSEDLSTYASINFQKQPEDRQ) is disordered. A Glycyl lysine isopeptide (Lys-Gly) (interchain with G-Cter in ubiquitin) cross-link involves residue K1179. Residues 1204-1229 (LGSNEGSSPRRSSEDLSTYASINFQK) show a composition bias toward polar residues. At Y1222 the chain carries Phosphotyrosine; by INSR.

As to quaternary structure, interacts with SOCS7. Interacts (via IRS-type PTB domain) with IGF1R and INSR (via the tyrosine-phosphorylated NPXY motif). Interacts with UBTF, FER and PIK3CA. Interacts (via phosphorylated YXXM motifs) with PIK3R1. Interacts with ROCK1. Interacts (via PH domain) with PHIP. Interacts with GRB2. Interacts with ALK. Interacts with EIF2AK2/PKR. Interacts with GKAP1. Interacts with DGKZ in the absence of insulin; insulin stimulation decreases this interaction. Found in a ternary complex with DGKZ and PIP5K1A in the absence of insulin stimulation. Interacts with SQSTM1; the interaction is disrupted by the presence of tensin TNS2. Interacts with NCK1 (via SH2 domain). Interacts with NCK2 (via SH3 domain). Interacts with SH2B1; this interaction enhances leptin-induced activation of the PI3-kinase pathway. Interacts with DVL2; this interaction promotes the Wnt/beta-catenin signaling pathway. Interacts with JAK1. Post-translationally, serine phosphorylation of IRS1 is a mechanism for insulin resistance. Ser-307 phosphorylation inhibits insulin action through disruption of IRS1 interaction with the insulin receptor, and Ser-789 phosphorylation is increased in the liver of insulin-resistant rats. Phosphorylation of Tyr-895 is required for GRB2-binding. Phosphorylated by ALK. Phosphorylated at Ser-265, Ser-302, Ser-632 and Ser-1100 by RPS6KB1; phosphorylation induces accelerated degradation of IRS1. Phosphorylated on tyrosine residues in response to insulin. In skeletal muscles, dephosphorylated on Tyr-608 by TNS2 under anabolic conditions; dephosphorylation results in the proteasomal degradation of IRS1. In terms of processing, ubiquitinated by the Cul7-RING(FBXW8) complex in a mTOR-dependent manner, leading to its degradation: the Cul7-RING(FBXW8) complex recognizes and binds IRS1 previously phosphorylated by S6 kinase (RPS6KB1 or RPS6KB2). Ubiquitinated by TRAF4 through 'Lys-29' linkage; this ubiquitination regulates the interaction of IRS1 with IGFR and IRS1 tyrosine phosphorylation upon IGF1 stimulation. S-nitrosylation at by BLVRB inhibits its activity.

It is found in the cytoplasm. Its subcellular location is the nucleus. In terms of biological role, signaling adapter protein that participates in the signal transduction from two prominent receptor tyrosine kinases, insulin receptor/INSR and insulin-like growth factor I receptor/IGF1R. Plays therefore an important role in development, growth, glucose homeostasis as well as lipid metabolism. Upon phosphorylation by the insulin receptor, functions as a signaling scaffold that propagates insulin action through binding to SH2 domain-containing proteins including the p85 regulatory subunit of PI3K, NCK1, NCK2, GRB2 or SHP2. Recruitment of GRB2 leads to the activation of the guanine nucleotide exchange factor SOS1 which in turn triggers the Ras/Raf/MEK/MAPK signaling cascade. Activation of the PI3K/AKT pathway is responsible for most of insulin metabolic effects in the cell, and the Ras/Raf/MEK/MAPK is involved in the regulation of gene expression and in cooperation with the PI3K pathway regulates cell growth and differentiation. Acts a positive regulator of the Wnt/beta-catenin signaling pathway through suppression of DVL2 autophagy-mediated degradation leading to cell proliferation. This is Insulin receptor substrate 1 (Irs1) from Rattus norvegicus (Rat).